Consider the following 215-residue polypeptide: Cytochrome b6 (215 aa).

A helical transmembrane segment spans residues 32–52 (IFYCLGGVTLVCFIIQFATGF). Position 35 (C35) interacts with heme c. 2 residues coordinate heme b: H86 and H100. The next 3 membrane-spanning stretches (helical) occupy residues 90 to 110 (ASMM…TGGF), 116 to 136 (LTWI…VTGY), and 186 to 206 (LHTF…FLMI). Residues H187 and H202 each coordinate heme b.

It belongs to the cytochrome b family. PetB subfamily. As to quaternary structure, the 4 large subunits of the cytochrome b6-f complex are cytochrome b6, subunit IV (17 kDa polypeptide, PetD), cytochrome f and the Rieske protein, while the 4 small subunits are PetG, PetL, PetM and PetN. The complex functions as a dimer. Heme b is required as a cofactor. The cofactor is heme c.

It is found in the cellular thylakoid membrane. In terms of biological role, component of the cytochrome b6-f complex, which mediates electron transfer between photosystem II (PSII) and photosystem I (PSI), cyclic electron flow around PSI, and state transitions. This is Cytochrome b6 from Acaryochloris marina (strain MBIC 11017).